The following is a 221-amino-acid chain: Large ribosomal subunit protein uL16y (221 aa).

Belongs to the universal ribosomal protein uL16 family. Component of the small ribosomal subunit. Mature ribosomes consist of a small (40S) and a large (60S) subunit. The 40S subunit contains about 33 different proteins and 1 molecule of RNA (18S). The 60S subunit contains about 49 different proteins and 3 molecules of RNA (25S, 5.8S and 5S).

This is Large ribosomal subunit protein uL16y (RPL10B) from Arabidopsis thaliana (Mouse-ear cress).